The following is a 247-amino-acid chain: Protein GrpE (247 aa).

The segment covering 31–49 has biased composition (basic and acidic residues); sequence QKEETKTTNKDNQKEDETV. Residues 31–79 are disordered; the sequence is QKEETKTTNKDNQKEDETVKNQSNQSNQSNQTKQTNTKQQKHQPKENSH. A compositionally biased stretch (low complexity) spans 50 to 68; it reads KNQSNQSNQSNQTKQTNTK.

Belongs to the GrpE family. As to quaternary structure, homodimer.

Its subcellular location is the cytoplasm. Participates actively in the response to hyperosmotic and heat shock by preventing the aggregation of stress-denatured proteins, in association with DnaK and GrpE. It is the nucleotide exchange factor for DnaK and may function as a thermosensor. Unfolded proteins bind initially to DnaJ; upon interaction with the DnaJ-bound protein, DnaK hydrolyzes its bound ATP, resulting in the formation of a stable complex. GrpE releases ADP from DnaK; ATP binding to DnaK triggers the release of the substrate protein, thus completing the reaction cycle. Several rounds of ATP-dependent interactions between DnaJ, DnaK and GrpE are required for fully efficient folding. The polypeptide is Protein GrpE (Onion yellows phytoplasma (strain OY-M)).